A 459-amino-acid chain; its full sequence is UDP-N-acetylmuramoylalanine--D-glutamate ligase (459 aa).

119–125 (GTNGKTT) lines the ATP pocket.

This sequence belongs to the MurCDEF family.

The protein resides in the cytoplasm. It catalyses the reaction UDP-N-acetyl-alpha-D-muramoyl-L-alanine + D-glutamate + ATP = UDP-N-acetyl-alpha-D-muramoyl-L-alanyl-D-glutamate + ADP + phosphate + H(+). Its pathway is cell wall biogenesis; peptidoglycan biosynthesis. In terms of biological role, cell wall formation. Catalyzes the addition of glutamate to the nucleotide precursor UDP-N-acetylmuramoyl-L-alanine (UMA). This is UDP-N-acetylmuramoylalanine--D-glutamate ligase from Lactiplantibacillus plantarum (strain ATCC BAA-793 / NCIMB 8826 / WCFS1) (Lactobacillus plantarum).